The sequence spans 330 residues: Beta-ketoacyl-[acyl-carrier-protein] synthase III (330 aa).

Catalysis depends on residues cysteine 115 and histidine 255. Residues 256 to 260 (QANFR) form an ACP-binding region. Residue asparagine 285 is part of the active site.

The protein belongs to the thiolase-like superfamily. FabH family. Homodimer.

It localises to the cytoplasm. It carries out the reaction malonyl-[ACP] + acetyl-CoA + H(+) = 3-oxobutanoyl-[ACP] + CO2 + CoA. It functions in the pathway lipid metabolism; fatty acid biosynthesis. In terms of biological role, catalyzes the condensation reaction of fatty acid synthesis by the addition to an acyl acceptor of two carbons from malonyl-ACP. Catalyzes the first condensation reaction which initiates fatty acid synthesis and may therefore play a role in governing the total rate of fatty acid production. Possesses both acetoacetyl-ACP synthase and acetyl transacylase activities. Its substrate specificity determines the biosynthesis of branched-chain and/or straight-chain of fatty acids. The polypeptide is Beta-ketoacyl-[acyl-carrier-protein] synthase III (Helicobacter pylori (strain HPAG1)).